We begin with the raw amino-acid sequence, 2230 residues long: DNA polymerase epsilon catalytic subunit A (2230 aa).

Polar residues predominate over residues 1–19; the sequence is MPTRQPSKYGNKFRSSSAS. Positions 1–24 are disordered; that stretch reads MPTRQPSKYGNKFRSSSASFKPKR. Residues C2101, C2104, C2136, and C2139 each coordinate Zn(2+). Residues 2101–2139 form a CysA-type zinc finger; sequence CNACCLIRDLDLCRDEDVLPEMGSDPNKAAPKPWRCPFC. Residues C2170, C2173, C2185, and C2187 each coordinate [4Fe-4S] cluster. The short motif at 2170–2187 is the CysB motif element; sequence CSKCGGLKISDFMEHCSC.

The protein belongs to the DNA polymerase type-B family. As to quaternary structure, heterotetramer. Consists of 4 subunits: pol2, dpb2, dpb3 and dpb4. The cofactor is [4Fe-4S] cluster.

The protein localises to the nucleus. It catalyses the reaction DNA(n) + a 2'-deoxyribonucleoside 5'-triphosphate = DNA(n+1) + diphosphate. Its function is as follows. DNA polymerase II participates in chromosomal DNA replication. The protein is DNA polymerase epsilon catalytic subunit A (pol2) of Aspergillus fumigatus (strain ATCC MYA-4609 / CBS 101355 / FGSC A1100 / Af293) (Neosartorya fumigata).